A 362-amino-acid polypeptide reads, in one-letter code: Sphingolipid delta(4)-desaturase (362 aa).

The span at 1–10 (MAESTATTTA) shows a compositional bias: low complexity. The disordered stretch occupies residues 1–20 (MAESTATTTAVPPPAEESWN). 3 consecutive transmembrane segments (helical) span residues 60 to 80 (PLTK…AYLL), 90 to 110 (FFLT…LAIH), and 121 to 143 (TLYN…AASF). The short motif at 110-114 (HELSH) is the Histidine box-1 element. The Histidine box-2 motif lies at 147–151 (HMEHH). 3 helical membrane passes run 169-189 (LILF…LLFY), 200-220 (PFTL…YLVV), and 228-248 (LAYF…AGHF). The Histidine box-3 motif lies at 290 to 294 (HIEHH).

Belongs to the fatty acid desaturase type 1 family. DEGS subfamily.

It is found in the membrane. The catalysed reaction is an N-acylsphinganine + 2 Fe(II)-[cytochrome b5] + O2 + 2 H(+) = an N-acylsphing-4-enine + 2 Fe(III)-[cytochrome b5] + 2 H2O. It functions in the pathway lipid metabolism; sphingolipid metabolism. Its function is as follows. Delta(4)-fatty-acid desaturase which introduces a double bond at the 4-position in the long-chain base (LCB) of ceramides. Required for sphingosine biosynthesis. The chain is Sphingolipid delta(4)-desaturase (dsd1) from Schizosaccharomyces pombe (strain 972 / ATCC 24843) (Fission yeast).